A 568-amino-acid polypeptide reads, in one-letter code: Putative ABC transporter ATP-binding protein CPE1583 (568 aa).

ABC transporter domains are found at residues 7-248 and 303-536; these read IEFK…GIRE and LEFK…ASLK. ATP-binding positions include 41–48 and 336–343; these read GPSGSGKS and GKNGAGKS.

It belongs to the ABC transporter superfamily.

Its subcellular location is the cell membrane. Functionally, probably part of an ABC transporter complex. Responsible for energy coupling to the transport system. The protein is Putative ABC transporter ATP-binding protein CPE1583 of Clostridium perfringens (strain 13 / Type A).